The primary structure comprises 66 residues: Large ribosomal subunit protein bL33c (66 aa).

The protein belongs to the bacterial ribosomal protein bL33 family.

It localises to the plastid. It is found in the chloroplast. The polypeptide is Large ribosomal subunit protein bL33c (Phalaenopsis aphrodite subsp. formosana (Moth orchid)).